The chain runs to 124 residues: Chemotaxis protein CheY1 (124 aa).

The Response regulatory domain maps to 2–120; the sequence is KLLVVDDSST…VLKEKLEVVL (119 aa). Residues aspartate 7, aspartate 8, aspartate 53, and asparagine 55 each coordinate Mg(2+). Aspartate 53 carries the 4-aspartylphosphate modification.

As to quaternary structure, interacts (when phosphorylated) with FliM. It depends on Mg(2+) as a cofactor. Phosphorylated by CheAY. Dephosphorylated (inactivated) by CheZ.

Its subcellular location is the cytoplasm. Its function is as follows. Chemotactic response regulator protein that modulates the rotation direction of bacterial flagellar motors. Plays an important role in the colonization and infection of Helicobacter pylori. Upon phosphorylation by CheA, interacts with the flagellar motor protein FliM to cause clockwise flagellar rotation and bacterial reversals, as opposed to straight swimming when CheY1 is not phosphorylated. In Helicobacter pylori (strain J99 / ATCC 700824) (Campylobacter pylori J99), this protein is Chemotaxis protein CheY1 (cheY1).